Reading from the N-terminus, the 188-residue chain is V-type ATP synthase subunit E (188 aa).

It belongs to the V-ATPase E subunit family.

Functionally, produces ATP from ADP in the presence of a proton gradient across the membrane. The sequence is that of V-type ATP synthase subunit E (atpE) from Thermus thermophilus (strain ATCC 27634 / DSM 579 / HB8).